Here is a 159-residue protein sequence, read N- to C-terminus: Protein-export protein SecB (159 aa).

The protein belongs to the SecB family. As to quaternary structure, homotetramer, a dimer of dimers. One homotetramer interacts with 1 SecA dimer.

Its subcellular location is the cytoplasm. One of the proteins required for the normal export of preproteins out of the cell cytoplasm. It is a molecular chaperone that binds to a subset of precursor proteins, maintaining them in a translocation-competent state. It also specifically binds to its receptor SecA. This chain is Protein-export protein SecB, found in Burkholderia mallei (strain NCTC 10229).